The sequence spans 445 residues: Tubulin beta-2 chain (445 aa).

Positions 1–4 (MREI) match the MREI motif motif. Residues Gln-11, Glu-69, Ser-138, Gly-142, Thr-143, Gly-144, Asn-204, and Asn-226 each coordinate GTP. Residue Glu-69 participates in Mg(2+) binding. The tract at residues 424–445 (QYQDATADEQGEFEEEGEEDEA) is disordered. Residues 429–445 (TADEQGEFEEEGEEDEA) show a composition bias toward acidic residues. The residue at position 438 (Glu-438) is a 5-glutamyl polyglutamate.

The protein belongs to the tubulin family. In terms of assembly, dimer of alpha and beta chains. A typical microtubule is a hollow water-filled tube with an outer diameter of 25 nm and an inner diameter of 15 nM. Alpha-beta heterodimers associate head-to-tail to form protofilaments running lengthwise along the microtubule wall with the beta-tubulin subunit facing the microtubule plus end conferring a structural polarity. Microtubules usually have 13 protofilaments but different protofilament numbers can be found in some organisms and specialized cells. It depends on Mg(2+) as a cofactor. In terms of processing, some glutamate residues at the C-terminus are polyglycylated, resulting in polyglycine chains on the gamma-carboxyl group. Glycylation is mainly limited to tubulin incorporated into axonemes (cilia and flagella) whereas glutamylation is prevalent in neuronal cells, centrioles, axonemes, and the mitotic spindle. Both modifications can coexist on the same protein on adjacent residues, and lowering polyglycylation levels increases polyglutamylation, and reciprocally. The precise function of polyglycylation is still unclear. Some glutamate residues at the C-terminus are polyglutamylated, resulting in polyglutamate chains on the gamma-carboxyl group. Polyglutamylation plays a key role in microtubule severing by spastin (SPAST). SPAST preferentially recognizes and acts on microtubules decorated with short polyglutamate tails: severing activity by SPAST increases as the number of glutamates per tubulin rises from one to eight, but decreases beyond this glutamylation threshold. As to expression, highly expressed in neuronal cells.

Its subcellular location is the cytoplasm. The protein localises to the cytoskeleton. Tubulin is the major constituent of microtubules, a cylinder consisting of laterally associated linear protofilaments composed of alpha- and beta-tubulin heterodimers. Microtubules grow by the addition of GTP-tubulin dimers to the microtubule end, where a stabilizing cap forms. Below the cap, tubulin dimers are in GDP-bound state, owing to GTPase activity of alpha-tubulin. The polypeptide is Tubulin beta-2 chain (Gallus gallus (Chicken)).